Here is a 180-residue protein sequence, read N- to C-terminus: NAD(P)H-quinone oxidoreductase subunit I, chloroplastic (180 aa).

4Fe-4S ferredoxin-type domains lie at 55-84 (GRIH…VDWK) and 95-124 (LNYS…MTEE). Positions 64, 67, 70, 74, 104, 107, 110, and 114 each coordinate [4Fe-4S] cluster.

The protein belongs to the complex I 23 kDa subunit family. As to quaternary structure, NDH is composed of at least 16 different subunits, 5 of which are encoded in the nucleus. [4Fe-4S] cluster serves as cofactor.

Its subcellular location is the plastid. It is found in the chloroplast thylakoid membrane. It catalyses the reaction a plastoquinone + NADH + (n+1) H(+)(in) = a plastoquinol + NAD(+) + n H(+)(out). The catalysed reaction is a plastoquinone + NADPH + (n+1) H(+)(in) = a plastoquinol + NADP(+) + n H(+)(out). Its function is as follows. NDH shuttles electrons from NAD(P)H:plastoquinone, via FMN and iron-sulfur (Fe-S) centers, to quinones in the photosynthetic chain and possibly in a chloroplast respiratory chain. The immediate electron acceptor for the enzyme in this species is believed to be plastoquinone. Couples the redox reaction to proton translocation, and thus conserves the redox energy in a proton gradient. This is NAD(P)H-quinone oxidoreductase subunit I, chloroplastic from Ranunculus macranthus (Large buttercup).